The primary structure comprises 500 residues: Cytochrome P450 monooxygenase ausR (500 aa).

A helical transmembrane segment spans residues 15 to 35 (GVGLYILWTVAVLFVIFKLLA). Cys439 contributes to the heme binding site.

It belongs to the cytochrome P450 family. The cofactor is heme.

The protein localises to the membrane. Its pathway is secondary metabolite biosynthesis; terpenoid biosynthesis. In terms of biological role, cytochrome P450 monooxygenase; part of the gene cluster that mediates the biosynthesis of calidodehydroaustin, a fungal meroterpenoid. The first step of the pathway is the synthesis of 3,5-dimethylorsellinic acid by the polyketide synthase ausA. 3,5-dimethylorsellinic acid is then prenylated by the polyprenyl transferase ausN. Further epoxidation by the FAD-dependent monooxygenase ausM and cyclization by the probable terpene cyclase ausL lead to the formation of protoaustinoid A. Protoaustinoid A is then oxidized to spiro-lactone preaustinoid A3 by the combined action of the FAD-binding monooxygenases ausB and ausC, and the dioxygenase ausE. Acid-catalyzed keto-rearrangement and ring contraction of the tetraketide portion of preaustinoid A3 by ausJ lead to the formation of preaustinoid A4. The aldo-keto reductase ausK, with the help of ausH, is involved in the next step by transforming preaustinoid A4 into isoaustinone which is in turn hydroxylated by the P450 monooxygenase ausI to form austinolide. The cytochrome P450 monooxygenase ausG modifies austinolide to austinol. Austinol is further acetylated to austin by the O-acetyltransferase ausP, which spontaneously changes to dehydroaustin. The cytochrome P450 monooxygenase ausR then converts dehydroaustin is into 7-dehydrodehydroaustin. The hydroxylation catalyzed by ausR permits the O-acetyltransferase ausQ to add an additional acetyl group to the molecule, leading to the formation of acetoxydehydroaustin. The short chain dehydrogenase ausT catalyzes the reduction of the double bond present between carbon atoms 1 and 2 to convert 7-dehydrodehydroaustin into 1,2-dihydro-7-hydroxydehydroaustin. AusQ catalyzes not only an acetylation reaction but also the addition of the PKS ausV diketide product to 1,2-dihydro-7-hydroxydehydroaustin, forming precalidodehydroaustin. Finally, the iron/alpha-ketoglutarate-dependent dioxygenase converts precalidodehydroaustin into calidodehydroaustin. The sequence is that of Cytochrome P450 monooxygenase ausR from Aspergillus calidoustus.